A 429-amino-acid polypeptide reads, in one-letter code: Probable M18 family aminopeptidase 2 (429 aa).

Residues H82, H156, and H401 each coordinate Zn(2+).

This sequence belongs to the peptidase M18 family. Zn(2+) is required as a cofactor.

This is Probable M18 family aminopeptidase 2 from Stutzerimonas stutzeri (strain A1501) (Pseudomonas stutzeri).